The primary structure comprises 191 residues: Pentapeptide repeat protein MfpA (191 aa).

A Pentapeptide repeat domain is found at 115-154 (CRLREVSLVGADLRKAVLRRADLTGSRVQDARLEEADLRG).

The protein belongs to the pentapeptide repeat protein family. As to quaternary structure, homodimer. Probably interacts with DNA gyrase.

When present on multicopy plasmids confers increased resistance to fluoroquinolone antibiotics such as ciprofloxacin and sparfloxacin but not the quinolone nalidixic acid. Forms a structure that exhibits size, shape and electrostatic similarity to B-form DNA; it may bind to DNA gyrase which is postulated to protect it from fluoroquinolones. This chain is Pentapeptide repeat protein MfpA, found in Mycolicibacterium smegmatis (strain ATCC 700084 / mc(2)155) (Mycobacterium smegmatis).